The chain runs to 549 residues: Glucose-6-phosphate isomerase (549 aa).

The Proton donor role is filled by Glu-355. Catalysis depends on residues His-387 and Lys-515.

It belongs to the GPI family.

The protein resides in the cytoplasm. The enzyme catalyses alpha-D-glucose 6-phosphate = beta-D-fructose 6-phosphate. It functions in the pathway carbohydrate biosynthesis; gluconeogenesis. The protein operates within carbohydrate degradation; glycolysis; D-glyceraldehyde 3-phosphate and glycerone phosphate from D-glucose: step 2/4. In terms of biological role, catalyzes the reversible isomerization of glucose-6-phosphate to fructose-6-phosphate. The chain is Glucose-6-phosphate isomerase from Histophilus somni (strain 2336) (Haemophilus somnus).